Reading from the N-terminus, the 243-residue chain is MALYTIGEVALLCDINPVTLRAWQRRYGLLKPQRTDGGHRLFNDADIDRIREIKRWIDNGVQVSKVKVLLSSDSSEQPNGWREQQEILLHYLQSSNLHSLRLWVKERGQDYPAQTLTTNLFVPLRRRLQCQQPALQALLGILDGILINYIALCLASARKKQGKDALVIGWNIHDTTRLWLEGWVASQQGWRIDVLAHSLSQFRPELFDGKTLLVWCGENQTLAQQQQLLAWRAQGRDIHPLGV.

The 70-residue stretch at 3 to 72 (LYTIGEVALL…VSKVKVLLSS (70 aa)) folds into the HTH merR-type domain. The segment at residues 6–25 (IGEVALLCDINPVTLRAWQR) is a DNA-binding region (H-T-H motif).

In terms of biological role, transcriptional activator of csgD, which is required for production of the curli (AgF). This is HTH-type transcriptional regulator MlrA from Salmonella typhimurium (strain SL1344).